Consider the following 131-residue polypeptide: Agouti-signaling protein (131 aa).

An N-terminal signal peptide occupies residues 1-22 (MDVTRLLLATLVGFLCFLTVHS). N39 carries an N-linked (GlcNAc...) asparagine glycan. The segment at 58 to 96 (KSKKISRKEAEKRKRSSKKKASIKKVARPPPPSPCVATR) is disordered. The segment covering 70 to 84 (RKRSSKKKASIKKVA) has biased composition (basic residues). Cystine bridges form between C92–C107, C99–C113, C106–C124, C110–C131, and C115–C122. Positions 92 to 131 (CVATRDSCKPPAPACCNPCASCQCRFFGSACTCRVLNPNC) constitute an Agouti domain.

The protein localises to the secreted. Functionally, involved in the regulation of melanogenesis. The binding of ASP to MC1R precludes alpha-MSH initiated signaling and thus blocks production of cAMP, leading to a down-regulation of eumelanogenesis (brown/black pigment) and thus increasing synthesis of pheomelanin (yellow/red pigment). This chain is Agouti-signaling protein, found in Rattus norvegicus (Rat).